The chain runs to 280 residues: Nucleotide-binding protein CV_3336 (280 aa).

An ATP-binding site is contributed by 8–15 (GLSGSGKS). GTP is bound at residue 57 to 60 (DTRS).

This sequence belongs to the RapZ-like family.

Its function is as follows. Displays ATPase and GTPase activities. This Chromobacterium violaceum (strain ATCC 12472 / DSM 30191 / JCM 1249 / CCUG 213 / NBRC 12614 / NCIMB 9131 / NCTC 9757 / MK) protein is Nucleotide-binding protein CV_3336.